Reading from the N-terminus, the 449-residue chain is Ribulose bisphosphate carboxylase large chain (449 aa).

K7 bears the N6,N6,N6-trimethyllysine mark. Residues N116 and T166 each contribute to the substrate site. K168 serves as the catalytic Proton acceptor. Residue K170 coordinates substrate. Mg(2+)-binding residues include K194, D196, and E197. K194 carries the N6-carboxylysine modification. The active-site Proton acceptor is H287. Residues R288, H320, and S372 each contribute to the substrate site.

The protein belongs to the RuBisCO large chain family. Type I subfamily. In terms of assembly, heterohexadecamer of 8 large chains and 8 small chains; disulfide-linked. The disulfide link is formed within the large subunit homodimers. Mg(2+) is required as a cofactor. In terms of processing, the disulfide bond which can form in the large chain dimeric partners within the hexadecamer appears to be associated with oxidative stress and protein turnover.

It is found in the plastid. The protein resides in the chloroplast. The enzyme catalyses 2 (2R)-3-phosphoglycerate + 2 H(+) = D-ribulose 1,5-bisphosphate + CO2 + H2O. It carries out the reaction D-ribulose 1,5-bisphosphate + O2 = 2-phosphoglycolate + (2R)-3-phosphoglycerate + 2 H(+). Its function is as follows. RuBisCO catalyzes two reactions: the carboxylation of D-ribulose 1,5-bisphosphate, the primary event in carbon dioxide fixation, as well as the oxidative fragmentation of the pentose substrate in the photorespiration process. Both reactions occur simultaneously and in competition at the same active site. The polypeptide is Ribulose bisphosphate carboxylase large chain (Aspidistra elatior (Cast-iron plant)).